Consider the following 388-residue polypeptide: Tumor protein p53-inducible protein 13 (388 aa).

Residues 1 to 27 (MVPPPPPPSRLLLVALVGLLSLHEVVA) form the signal peptide. Over 28-304 (EPAEEAGTRC…ARGPTPRTEE (277 aa)) the chain is Extracellular. Residues 305–325 (AAWAAMALTFLLVLLTLATLC) form a helical membrane-spanning segment. The Cytoplasmic portion of the chain corresponds to 326 to 388 (TRLHRNFRRS…DSGPDSESSD (63 aa)). Residues 361 to 372 (PSRRIKRSRRRP) show a composition bias toward basic residues. The interval 361 to 388 (PSRRIKRSRRRPLLPPTPDSGPDSESSD) is disordered.

Its subcellular location is the cell membrane. It localises to the cytoplasm. May act as a tumor suppressor. Inhibits tumor cell growth, when overexpressed. The chain is Tumor protein p53-inducible protein 13 (Tp53i13) from Rattus norvegicus (Rat).